Reading from the N-terminus, the 238-residue chain is MSSIALGVNIDHIATLRNARNVDYPCIIEVANIAVNNGADFITVHLREDRRHIMDDDVFRLKSSLKVPLNLEIAATDEMLSIAIEVKPKCVCLVPEKRQELTTEGGLDVGSIFSYLVSFIEKLHSYDIDVTLFIEPDISQIDLAKKLHANNVELHTGKYCNNATQNELSKIIKAAEHCHHQNITCHAGHGLNYQSAATIAKVPYISALNIGHFLICEAVLHGIGKSIYKMKQVIASTD.

Asn-9 contributes to the 3-amino-2-oxopropyl phosphate binding site. 11–12 (DH) provides a ligand contact to 1-deoxy-D-xylulose 5-phosphate. Residue Arg-20 participates in 3-amino-2-oxopropyl phosphate binding. His-45 functions as the Proton acceptor in the catalytic mechanism. 2 residues coordinate 1-deoxy-D-xylulose 5-phosphate: Arg-47 and His-52. Glu-72 acts as the Proton acceptor in catalysis. Thr-102 contributes to the 1-deoxy-D-xylulose 5-phosphate binding site. His-189 (proton donor) is an active-site residue. 3-amino-2-oxopropyl phosphate-binding positions include Gly-190 and 211-212 (GH).

The protein belongs to the PNP synthase family. As to quaternary structure, homooctamer; tetramer of dimers.

The protein localises to the cytoplasm. It catalyses the reaction 3-amino-2-oxopropyl phosphate + 1-deoxy-D-xylulose 5-phosphate = pyridoxine 5'-phosphate + phosphate + 2 H2O + H(+). It participates in cofactor biosynthesis; pyridoxine 5'-phosphate biosynthesis; pyridoxine 5'-phosphate from D-erythrose 4-phosphate: step 5/5. Functionally, catalyzes the complicated ring closure reaction between the two acyclic compounds 1-deoxy-D-xylulose-5-phosphate (DXP) and 3-amino-2-oxopropyl phosphate (1-amino-acetone-3-phosphate or AAP) to form pyridoxine 5'-phosphate (PNP) and inorganic phosphate. The protein is Pyridoxine 5'-phosphate synthase of Ehrlichia canis (strain Jake).